A 672-amino-acid chain; its full sequence is DNA-directed RNA polymerase subunit gamma (672 aa).

Zn(2+) contacts are provided by Cys70, Cys72, Cys85, and Cys88. The Mg(2+) site is built by Asp466, Asp468, and Asp470.

This sequence belongs to the RNA polymerase beta' chain family. RpoC1 subfamily. In terms of assembly, in cyanobacteria the RNAP catalytic core is composed of 2 alpha, 1 beta, 1 beta', 1 gamma and 1 omega subunit. When a sigma factor is associated with the core the holoenzyme is formed, which can initiate transcription. It depends on Mg(2+) as a cofactor. Zn(2+) serves as cofactor.

It carries out the reaction RNA(n) + a ribonucleoside 5'-triphosphate = RNA(n+1) + diphosphate. In terms of biological role, DNA-dependent RNA polymerase catalyzes the transcription of DNA into RNA using the four ribonucleoside triphosphates as substrates. This Trichodesmium erythraeum (strain IMS101) protein is DNA-directed RNA polymerase subunit gamma.